We begin with the raw amino-acid sequence, 311 residues long: Ribosomal RNA small subunit methyltransferase H (311 aa).

Residues 33–35 (AGH), aspartate 53, phenylalanine 80, aspartate 101, and glutamine 108 each bind S-adenosyl-L-methionine.

It belongs to the methyltransferase superfamily. RsmH family.

It is found in the cytoplasm. It carries out the reaction cytidine(1402) in 16S rRNA + S-adenosyl-L-methionine = N(4)-methylcytidine(1402) in 16S rRNA + S-adenosyl-L-homocysteine + H(+). Its function is as follows. Specifically methylates the N4 position of cytidine in position 1402 (C1402) of 16S rRNA. This Clostridioides difficile (strain 630) (Peptoclostridium difficile) protein is Ribosomal RNA small subunit methyltransferase H.